Reading from the N-terminus, the 871-residue chain is Ubiquitin carboxyl-terminal hydrolase 8 (871 aa).

Residues 4–99 (TSPDESPDST…GETGEASVSG (96 aa)) enclose the DUSP domain. Residues 279 to 869 (TGLQNLGNTC…AAYVLFYKRL (591 aa)) enclose the USP domain. Residue Cys288 is the Nucleophile of the active site. The disordered stretch occupies residues 615-650 (ENLENPTEEEATDKTDTDGTTSVEDTNSTDVKETTE). The active-site Proton acceptor is the His828.

This sequence belongs to the peptidase C19 family.

The catalysed reaction is Thiol-dependent hydrolysis of ester, thioester, amide, peptide and isopeptide bonds formed by the C-terminal Gly of ubiquitin (a 76-residue protein attached to proteins as an intracellular targeting signal).. In terms of biological role, recognizes and hydrolyzes the peptide bond at the C-terminal Gly of ubiquitin. Involved in the processing of poly-ubiquitin precursors as well as that of ubiquitinated proteins. This is Ubiquitin carboxyl-terminal hydrolase 8 (UBP8) from Arabidopsis thaliana (Mouse-ear cress).